A 127-amino-acid chain; its full sequence is Nuclear transport factor 2 (127 aa).

An N6-acetyllysine modification is found at K4. An NTF2 domain is found at 10-121 (IGSSFIQHYY…WVCTNDMFRL (112 aa)).

Homodimer. Interacts with RAN (GDP-bound form); the interaction is direct and regulates RAN nuclear import. Interacts with the nucleoporins NUP54, NUP58 and NUP62 (via FG repeats); recruits NUTF2 to the nuclear pore complex a step required for NUTF2-mediated GDP-bound RAN nuclear import. Interacts with CAPG; mediates its nuclear import.

It is found in the cytoplasm. The protein localises to the cytosol. It localises to the nucleus outer membrane. Its subcellular location is the nucleus. The protein resides in the nuclear pore complex. It is found in the nucleus inner membrane. The protein localises to the nucleoplasm. Functionally, mediates the import of GDP-bound RAN from the cytoplasm into the nucleus which is essential for the function of RAN in cargo receptor-mediated nucleocytoplasmic transport. Thereby, plays indirectly a more general role in cargo receptor-mediated nucleocytoplasmic transport. Interacts with GDP-bound RAN in the cytosol, recruits it to the nuclear pore complex via its interaction with nucleoporins and promotes its nuclear import. The protein is Nuclear transport factor 2 of Bos taurus (Bovine).